A 263-amino-acid chain; its full sequence is Protein YpjB (263 aa).

The segment covering 233 to 244 (DFDDSSSEDDPV) has biased composition (acidic residues). The disordered stretch occupies residues 233-263 (DFDDSSSEDDPVENSPVVTSPVVSSSKSSFQ). Residues 245-263 (ENSPVVTSPVVSSSKSSFQ) show a composition bias toward low complexity.

The protein is Protein YpjB (ypjB) of Escherichia coli (strain K12).